A 307-amino-acid polypeptide reads, in one-letter code: Elongation factor Ts (307 aa).

An involved in Mg(2+) ion dislocation from EF-Tu region spans residues 79-82 (TDFV).

It belongs to the EF-Ts family.

Its subcellular location is the cytoplasm. In terms of biological role, associates with the EF-Tu.GDP complex and induces the exchange of GDP to GTP. It remains bound to the aminoacyl-tRNA.EF-Tu.GTP complex up to the GTP hydrolysis stage on the ribosome. This Bartonella henselae (strain ATCC 49882 / DSM 28221 / CCUG 30454 / Houston 1) (Rochalimaea henselae) protein is Elongation factor Ts.